The following is a 190-amino-acid chain: Tegument antigen (190 aa).

2 EF-hand domains span residues 8–43 (SQMEEFIRAFLEIDADSNEMIDKQELIKYCQKYRLD) and 51–77 (IARFDTDKDNKISIEEFCRGFGLKVSE). Aspartate 55, aspartate 57, aspartate 59, lysine 61, and glutamate 66 together coordinate Ca(2+).

As to expression, adult and schistosomula tegument.

In Schistosoma mansoni (Blood fluke), this protein is Tegument antigen.